The following is a 453-amino-acid chain: Probable exopolygalacturonase B (453 aa).

Residues 1–16 (MKFLALAALFASTVSS) form the signal peptide. N-linked (GlcNAc...) asparagine glycans are attached at residues N185 and N225. Catalysis depends on D255, which acts as the Proton donor. Cysteines 257 and 274 form a disulfide. N-linked (GlcNAc...) asparagine glycosylation is found at N263 and N275. H278 is an active-site residue. PbH1 repeat units lie at residues 295–316 (IENV…RLKA) and 327–348 (INNV…VLDQ). Residues N302, N329, N354, and N366 are each glycosylated (N-linked (GlcNAc...) asparagine). Residues 362-405 (PSRVNFTNIVFENIYGTSSGKHGKVVADLTCSPNAVCSGIRLKN) form a PbH1 3 repeat. A disulfide bridge connects residues C392 and C398. A glycan (N-linked (GlcNAc...) asparagine) is linked at N436.

This sequence belongs to the glycosyl hydrolase 28 family.

The protein resides in the secreted. It catalyses the reaction [(1-&gt;4)-alpha-D-galacturonosyl](n) + H2O = alpha-D-galacturonate + [(1-&gt;4)-alpha-D-galacturonosyl](n-1). Its function is as follows. Specific in hydrolyzing the terminal glycosidic bond of polygalacturonic acid and oligogalacturonates. This is Probable exopolygalacturonase B (pgxB) from Neosartorya fischeri (strain ATCC 1020 / DSM 3700 / CBS 544.65 / FGSC A1164 / JCM 1740 / NRRL 181 / WB 181) (Aspergillus fischerianus).